The sequence spans 180 residues: LDLR chaperone boca (180 aa).

An N-terminal signal peptide occupies residues 1–18; the sequence is MQTRLVLLLLALTPLVLA. The segment covering 48–61 has biased composition (acidic residues); sequence QWEEDEEPLEDDEL. Residues 48-78 form a disordered region; that stretch reads QWEEDEEPLEDDELPEHLRPQPKLDLSNLDS. Positions 93–166 are structured core; it reads TLMTFVSVTG…QERCKGVTIE (74 aa). A Prevents secretion from ER motif is present at residues 177–180; the sequence is KDEL.

Belongs to the MESD family. As to quaternary structure, monomer. Interacts with Arrow and Yolkless.

It is found in the endoplasmic reticulum. Functionally, chaperone specifically assisting the folding of beta-propeller/EGF modules within the family of low-density lipoprotein receptors (LDLRs). Acts as a modulator of the Wg pathway, since some LDLRs are coreceptors for the canonical Wnt pathway. This Drosophila melanogaster (Fruit fly) protein is LDLR chaperone boca (boca).